Consider the following 259-residue polypeptide: Phosphonates import ATP-binding protein PhnC (259 aa).

Residues 4–245 form the ABC transporter domain; the sequence is ISIQSVTKRF…ALRTIYQREG (242 aa). Residue 37-44 participates in ATP binding; that stretch reads GPSGAGKS.

It belongs to the ABC transporter superfamily. Phosphonates importer (TC 3.A.1.9.1) family. In terms of assembly, the complex is composed of two ATP-binding proteins (PhnC), two transmembrane proteins (PhnE) and a solute-binding protein (PhnD).

It is found in the cell inner membrane. It catalyses the reaction phosphonate(out) + ATP + H2O = phosphonate(in) + ADP + phosphate + H(+). Functionally, part of the ABC transporter complex PhnCDE involved in phosphonates import. Responsible for energy coupling to the transport system. In Thiobacillus denitrificans (strain ATCC 25259 / T1), this protein is Phosphonates import ATP-binding protein PhnC.